Reading from the N-terminus, the 575-residue chain is Probable lysosomal cobalamin transporter (575 aa).

5 helical membrane-spanning segments follow: residues 8–28, 46–66, 95–115, 144–164, and 188–208; these read LIWV…SVFI, IVAI…VALV, LVYY…VPFV, YTLS…FVPI, and ALTF…ALHT. N-linked (GlcNAc...) asparagine glycosylation is present at Asn233. Helical transmembrane passes span 314–334, 376–396, 420–440, and 504–524; these read LVGL…ILTA, AIFT…IATV, VMTA…SMIV, and FGAI…LALI. The span at 537–549 shows a compositional bias: acidic residues; that stretch reads QLDEDAEEAEEEA. Positions 537 to 556 are disordered; the sequence is QLDEDAEEAEEEALLSGSRR.

It belongs to the LIMR family. LMBRD1 subfamily.

Its subcellular location is the lysosome membrane. Probable lysosomal cobalamin transporter. Required to export cobalamin from lysosomes allowing its conversion to cofactors. This chain is Probable lysosomal cobalamin transporter, found in Emericella nidulans (strain FGSC A4 / ATCC 38163 / CBS 112.46 / NRRL 194 / M139) (Aspergillus nidulans).